Reading from the N-terminus, the 124-residue chain is Cytochrome c2 (124 aa).

Gln-1 is modified (pyrrolidone carboxylic acid). Residues Cys-16, Cys-19, His-20, and Met-85 each contribute to the heme c site.

It belongs to the cytochrome c family. Post-translationally, binds 1 heme c group covalently per subunit.

The protein localises to the periplasm. Cytochrome c2 is found mainly in purple, non-sulfur, photosynthetic bacteria where it functions as the electron donor to the oxidized bacteriochlorophyll in the photophosphorylation pathway. However, it may also have a role in the respiratory chain and is found in some non-photosynthetic bacteria. The protein is Cytochrome c2 of Afifella marina (Rhodobium marinum).